The following is a 508-amino-acid chain: MGLPWYRVHTVVLNDPGRLLAVHIMHTALVSGWAGSMALYELAVFDPSDPVLDPMWRQGMFVIPFMTRLGITDSWGGWSISGGTVTNPGIWSYEGVAGTHIVFSGLCFLAAIWHWVYWDLEIFSDERTGKPSLDLPKIFGIHLFLAGVACFGFGAFHVTGLYGPGIWVSDPYGLTGKVQAVNPAWGAEGFDPFVPGGIASHHIAAGTLGILAGLFHLSVRPPQRLYKGLRMGNIETVLSSSIAAVFFAAFVVAGTMWYGSATTPIELFGPTRYQWDQGYFQQEIYRRVSNGLAENLSLSEAWSKIPEKLAFYDYIGNNPAKGGLFRAGSMDNGDGIAVGWLGHPVFRDKEGRELFVRRMPTFFETFPVVLVDEEGIVRADVPFRRAESKYSVEQVGVTVEFYGGELNGVSYSDPATVKKYARRSQLGEIFELDRATLKSDGVFRSSPRGWFTFGHATFALLFFFGHIWHGARTLFRDVFAGIDPDLDAQVEFGTFQKVGDPTTRKQAA.

Transmembrane regions (helical) follow at residues 21–36 (AVHI…WAGS), 101–115 (IVFS…IWHW), 140–156 (GIHL…FGAF), 203–218 (IAAG…FHLS), 237–252 (VLSS…AFVV), and 457–472 (TFAL…HGAR).

It belongs to the PsbB/PsbC family. PsbB subfamily. PSII is composed of 1 copy each of membrane proteins PsbA, PsbB, PsbC, PsbD, PsbE, PsbF, PsbH, PsbI, PsbJ, PsbK, PsbL, PsbM, PsbT, PsbX, PsbY, PsbZ, Psb30/Ycf12, at least 3 peripheral proteins of the oxygen-evolving complex and a large number of cofactors. It forms dimeric complexes. Binds multiple chlorophylls. PSII binds additional chlorophylls, carotenoids and specific lipids. serves as cofactor.

It is found in the plastid. The protein localises to the chloroplast thylakoid membrane. In terms of biological role, one of the components of the core complex of photosystem II (PSII). It binds chlorophyll and helps catalyze the primary light-induced photochemical processes of PSII. PSII is a light-driven water:plastoquinone oxidoreductase, using light energy to abstract electrons from H(2)O, generating O(2) and a proton gradient subsequently used for ATP formation. The chain is Photosystem II CP47 reaction center protein from Triticum aestivum (Wheat).